The chain runs to 163 residues: Dual specificity phosphatase 28 (163 aa).

In terms of domain architecture, Tyrosine-protein phosphatase spans 10 to 151; it reads PFARVAPALF…LQKYEQTLQA (142 aa). Catalysis depends on C95, which acts as the Phosphocysteine intermediate.

Belongs to the protein-tyrosine phosphatase family. Non-receptor class dual specificity subfamily. In terms of assembly, monomer.

It carries out the reaction O-phospho-L-tyrosyl-[protein] + H2O = L-tyrosyl-[protein] + phosphate. The catalysed reaction is O-phospho-L-seryl-[protein] + H2O = L-seryl-[protein] + phosphate. The enzyme catalyses O-phospho-L-threonyl-[protein] + H2O = L-threonyl-[protein] + phosphate. Functionally, has phosphatase activity with the synthetic substrate 6,8-difluoro-4-methylumbelliferyl phosphate (in vitro). Has almost no detectable activity with phosphotyrosine, even less activity with phosphothreonine and displays complete lack of activity with phosphoserine. The poor activity with phosphotyrosine may be due to steric hindrance by bulky amino acid sidechains that obstruct access to the active site. The chain is Dual specificity phosphatase 28 (Dusp28) from Mus musculus (Mouse).